The sequence spans 531 residues: CTP synthase (531 aa).

The amidoligase domain stretch occupies residues 1-265 (MAKYIFITGG…DRIITERLNL (265 aa)). S13 lines the CTP pocket. UTP is bound at residue S13. 14–19 (SLGKGI) lines the ATP pocket. Y54 provides a ligand contact to L-glutamine. D71 lines the ATP pocket. 2 residues coordinate Mg(2+): D71 and E139. Residues 146–148 (DIE), 186–191 (KTKPTQ), and K222 contribute to the CTP site. Residues 186-191 (KTKPTQ) and K222 contribute to the UTP site. In terms of domain architecture, Glutamine amidotransferase type-1 spans 290–529 (NVALVGKYVE…IRACLEYKRK (240 aa)). G349 provides a ligand contact to L-glutamine. The active-site Nucleophile; for glutamine hydrolysis is C376. L-glutamine contacts are provided by residues 377 to 380 (LGMQ), E400, and R457. Active-site residues include H502 and E504.

Belongs to the CTP synthase family. In terms of assembly, homotetramer.

It carries out the reaction UTP + L-glutamine + ATP + H2O = CTP + L-glutamate + ADP + phosphate + 2 H(+). The catalysed reaction is L-glutamine + H2O = L-glutamate + NH4(+). It catalyses the reaction UTP + NH4(+) + ATP = CTP + ADP + phosphate + 2 H(+). It functions in the pathway pyrimidine metabolism; CTP biosynthesis via de novo pathway; CTP from UDP: step 2/2. Its activity is regulated as follows. Allosterically activated by GTP, when glutamine is the substrate; GTP has no effect on the reaction when ammonia is the substrate. The allosteric effector GTP functions by stabilizing the protein conformation that binds the tetrahedral intermediate(s) formed during glutamine hydrolysis. Inhibited by the product CTP, via allosteric rather than competitive inhibition. In terms of biological role, catalyzes the ATP-dependent amination of UTP to CTP with either L-glutamine or ammonia as the source of nitrogen. Regulates intracellular CTP levels through interactions with the four ribonucleotide triphosphates. In Aquifex aeolicus (strain VF5), this protein is CTP synthase.